The following is a 584-amino-acid chain: FAD-linked oxidoreductase OXR2 (584 aa).

The first 22 residues, 1 to 22 (MRSIISAFILSLNFCTQPLVRG), serve as a signal peptide directing secretion. 7 N-linked (GlcNAc...) asparagine glycosylation sites follow: Asn75, Asn97, Asn115, Asn225, Asn302, Asn321, and Asn507. In terms of domain architecture, FAD-binding PCMH-type spans 128–310 (LGMLSEKYIA…LNATFKVEPV (183 aa)).

This sequence belongs to the oxygen-dependent FAD-linked oxidoreductase family. FAD serves as cofactor.

It participates in secondary metabolite biosynthesis. FAD-linked oxidoreductase; part of the gene cluster that mediates the biosynthesis of a tyrosine-derived cytochalasan acting as a fungal signal recognized by resistant rice plants and leads to avirulence in Pi33 resistant rice cultivars. The first step in the pathway is catalyzed by the hybrid PKS-NRPS ACE1, assisted by the enoyl reductase RAP1, that are responsible for fusion of the tyrosine precursor and the polyketide backbone. The polyketide synthase module (PKS) of ACE1 is responsible for the synthesis of the polyketide backbone and the downstream nonribosomal peptide synthetase (NRPS) amidates the carboxyl end of the polyketide with the tyrosine precursor. Because ACE1 lacks a designated enoylreductase (ER) domain, the required activity is provided the enoyl reductase RAP1. Reduction by the hydrolyase ORFZ, followed by dehydration and intra-molecular Diels-Alder cyclization by the Diels-Alderase ORF3 then yield the required isoindolone-fused macrocycle. A number of oxidative steps catalyzed by the tailoring enzymes identified within the cluster, including cytochrome P450 monooxygenases CYP1 to CYP4, the FAD-linked oxidoreductase OXR2 and the short-chain dehydrogenase/reductase OXR1, are further required to afford the final cytochalasans that confer avirulence and which have still to be identified. The monooxygenase CYP1 has been shown to be a site-selective C-18 hydroxylase whereas the function of CYP3 is the site-selective epoxidation of the C-6/C-7 olefin that is present in some intermediate compounds. Finally, SYN2 and RAP2 are not required for avirulence in Pi33 resistant rice cultivars. In Pyricularia oryzae (strain 70-15 / ATCC MYA-4617 / FGSC 8958) (Rice blast fungus), this protein is FAD-linked oxidoreductase OXR2.